The chain runs to 233 residues: Biosynthetic peptidoglycan transglycosylase (233 aa).

Residues 8–28 (LIALPVGIFIFFNAYVYGNII) traverse the membrane as a helical segment.

This sequence belongs to the glycosyltransferase 51 family.

It localises to the cell inner membrane. The catalysed reaction is [GlcNAc-(1-&gt;4)-Mur2Ac(oyl-L-Ala-gamma-D-Glu-L-Lys-D-Ala-D-Ala)](n)-di-trans,octa-cis-undecaprenyl diphosphate + beta-D-GlcNAc-(1-&gt;4)-Mur2Ac(oyl-L-Ala-gamma-D-Glu-L-Lys-D-Ala-D-Ala)-di-trans,octa-cis-undecaprenyl diphosphate = [GlcNAc-(1-&gt;4)-Mur2Ac(oyl-L-Ala-gamma-D-Glu-L-Lys-D-Ala-D-Ala)](n+1)-di-trans,octa-cis-undecaprenyl diphosphate + di-trans,octa-cis-undecaprenyl diphosphate + H(+). Its pathway is cell wall biogenesis; peptidoglycan biosynthesis. In terms of biological role, peptidoglycan polymerase that catalyzes glycan chain elongation from lipid-linked precursors. This Neisseria meningitidis serogroup B (strain ATCC BAA-335 / MC58) protein is Biosynthetic peptidoglycan transglycosylase.